The primary structure comprises 159 residues: Phosphopantetheine adenylyltransferase (159 aa).

T10 contacts substrate. ATP contacts are provided by residues 10–11 (TF) and H18. 3 residues coordinate substrate: K42, M74, and R88. ATP-binding positions include 89 to 91 (GLR), E99, and 124 to 130 (WSFISSS).

This sequence belongs to the bacterial CoaD family. Homohexamer. It depends on Mg(2+) as a cofactor.

The protein resides in the cytoplasm. It carries out the reaction (R)-4'-phosphopantetheine + ATP + H(+) = 3'-dephospho-CoA + diphosphate. It participates in cofactor biosynthesis; coenzyme A biosynthesis; CoA from (R)-pantothenate: step 4/5. Its function is as follows. Reversibly transfers an adenylyl group from ATP to 4'-phosphopantetheine, yielding dephospho-CoA (dPCoA) and pyrophosphate. This Escherichia coli O7:K1 (strain IAI39 / ExPEC) protein is Phosphopantetheine adenylyltransferase.